Reading from the N-terminus, the 427-residue chain is Glutamate-1-semialdehyde 2,1-aminomutase (427 aa).

Position 265 is an N6-(pyridoxal phosphate)lysine (K265).

Belongs to the class-III pyridoxal-phosphate-dependent aminotransferase family. HemL subfamily. As to quaternary structure, homodimer. The cofactor is pyridoxal 5'-phosphate.

It is found in the cytoplasm. The enzyme catalyses (S)-4-amino-5-oxopentanoate = 5-aminolevulinate. It functions in the pathway porphyrin-containing compound metabolism; protoporphyrin-IX biosynthesis; 5-aminolevulinate from L-glutamyl-tRNA(Glu): step 2/2. The chain is Glutamate-1-semialdehyde 2,1-aminomutase from Paraburkholderia phytofirmans (strain DSM 17436 / LMG 22146 / PsJN) (Burkholderia phytofirmans).